Reading from the N-terminus, the 711-residue chain is Mitochondrial intermediate peptidase (711 aa).

The transit peptide at 1–33 (MLLAAGARYARRLCGRGAAAALQGRTGRSCARD) directs the protein to the mitochondrion. Lys124 bears the N6-acetyllysine mark. A Zn(2+)-binding site is contributed by His493. Glu494 is a catalytic residue. The Zn(2+) site is built by His497 and His500.

The protein belongs to the peptidase M3 family. As to quaternary structure, monomer. It depends on Zn(2+) as a cofactor.

It is found in the mitochondrion matrix. The catalysed reaction is Release of an N-terminal octapeptide as second stage of processing of some proteins imported into the mitochondrion.. Its activity is regulated as follows. Activity is divalent cation-dependent. It is stimulated by manganese, magnesium or calcium ions and reversibly inhibited by zinc, cobalt and iron. In terms of biological role, cleaves proteins, imported into the mitochondrion, to their mature size. The protein is Mitochondrial intermediate peptidase (Mipep) of Mus musculus (Mouse).